A 453-amino-acid polypeptide reads, in one-letter code: Flavonol-3-O-rhamnosyltransferase (453 aa).

Catalysis depends on His-24, which acts as the Proton acceptor. Residue His-24 coordinates an anthocyanidin. Asp-119 functions as the Charge relay in the catalytic mechanism. An an anthocyanidin-binding site is contributed by His-150. The UDP-beta-L-rhamnose site is built by Thr-280, Ala-333, His-350, Asn-354, Ser-355, and Glu-358. Ala-373 serves as a coordination point for an anthocyanidin.

This sequence belongs to the UDP-glycosyltransferase family. In terms of tissue distribution, expressed in leaves, flowers, siliques, and stems. Expressed in the shoot apex.

The enzyme catalyses kaempferol + UDP-beta-L-rhamnose = kaempferol 3-O-alpha-L-rhamnoside + UDP + H(+). It catalyses the reaction UDP-beta-L-rhamnose + quercetin = quercitrin + UDP + H(+). It functions in the pathway flavonoid metabolism. Its function is as follows. Flavonol 3-O-rhamnosyltransferase that catalyzes the transfer of rhamnose from UDP-rhamnose to the 3-OH position of kaempferol and quercetin. Possesses low quercetin 3-O-glucosyltransferase activity in vitro. This Arabidopsis thaliana (Mouse-ear cress) protein is Flavonol-3-O-rhamnosyltransferase.